Here is a 697-residue protein sequence, read N- to C-terminus: MAGNKLLVYLLRRDLRATDNPILHHLATSDHGFTHLLPIYILPPHQIETSGFVVEGQKSPYPLAKSQVGRFWRCGPLRAKFQAECIWDVKKNFENIGSGMLIRIGKFDDVLKHLIKSLNEDHQSIDTVWMTEEPSKEELDDQTAVASVCSKEGIGFKLWHDEKYFIDDRDNGLKDPQDTPDVFTTYRKTQEPLRERPRPPLPRPQAGSLPSFPSWIPPQQAPFRIPDDYDEFERLLLEPVKAPIISDPPQFPEGAKSAHPFKGGETPAWDRLYHLIKSGAMTTYQETRNGLLGTEYSTKLSAFLAMGTITARSIHAELVKFEDGSEESYSRGFGFGKGENEGTRAVRFELLWRDYMRLCTFKFRTRLFKIDGFKGASGNYTKKWLTDREEDAEPDQNPTPAQVKDMIDRWIRGTTGMGLVDASQRELQLTGYTSNRARQNVASYLTKSLGIDWRLGAEYYEQSLIDYDTHSNWGNWQYQASCGNDPRSRSFNQVKQAFDYDQDGRFTRTWVNEVKSIDRLEHVFQICTCPKQELEKHGLSDNIMVTNPLKRIDFSVTKPRGNRRPYRWRKQGDRGRGGRGGRGGGTGNTSGNGDNRHNEPSPPNGGNRHNDFSPANGGSYMQGQPISGGYQQMAWRGNSHGLPSGRGYNSRQYMLDYSQQQQQPQHQLQHYYAHQQHQHPHPRQQQQQFYHQIPPHI.

The region spanning 5–164 (KLLVYLLRRD…GFKLWHDEKY (160 aa)) is the Photolyase/cryptochrome alpha/beta domain. Disordered stretches follow at residues 170 to 215 (DNGL…FPSW) and 554 to 697 (FSVT…PPHI). The span at 188–198 (KTQEPLRERPR) shows a compositional bias: basic and acidic residues. A compositionally biased stretch (basic residues) spans 560-569 (RGNRRPYRWR). Gly residues predominate over residues 578 to 590 (GRGGRGGGTGNTS). Composition is skewed to low complexity over residues 659–675 (QQQQ…YAHQ) and 683–697 (RQQQ…PPHI).

The protein belongs to the DNA photolyase class-1 family. The cofactor is FAD. (6R)-5,10-methylene-5,6,7,8-tetrahydrofolate is required as a cofactor.

Its function is as follows. May have a photoreceptor function. The chain is Putative cryptochrome DASH from Gibberella zeae (strain ATCC MYA-4620 / CBS 123657 / FGSC 9075 / NRRL 31084 / PH-1) (Wheat head blight fungus).